A 368-amino-acid polypeptide reads, in one-letter code: Isopentenyl-diphosphate delta-isomerase (368 aa).

A substrate-binding site is contributed by 7–8 (RK). FMN contacts are provided by residues threonine 65, 66–68 (GMT), serine 96, and asparagine 125. Substrate is bound at residue 96 to 98 (SQR). Substrate is bound at residue glutamine 160. Glutamate 161 provides a ligand contact to Mg(2+). FMN contacts are provided by residues lysine 193, serine 218, threonine 223, 275–277 (GIR), and 296–297 (AL).

The protein belongs to the IPP isomerase type 2 family. As to quaternary structure, homooctamer. Dimer of tetramers. FMN serves as cofactor. It depends on NADPH as a cofactor. Requires Mg(2+) as cofactor.

It is found in the cytoplasm. It catalyses the reaction isopentenyl diphosphate = dimethylallyl diphosphate. In terms of biological role, involved in the biosynthesis of isoprenoids. Catalyzes the 1,3-allylic rearrangement of the homoallylic substrate isopentenyl (IPP) to its allylic isomer, dimethylallyl diphosphate (DMAPP). The sequence is that of Isopentenyl-diphosphate delta-isomerase from Saccharolobus solfataricus (strain ATCC 35092 / DSM 1617 / JCM 11322 / P2) (Sulfolobus solfataricus).